The chain runs to 101 residues: DNA-binding protein Fis (101 aa).

Positions 77 to 96 (QTRAANMLGINRGTLRKKLK) form a DNA-binding region, H-T-H motif.

This sequence belongs to the transcriptional regulatory Fis family. Homodimer.

Functionally, activates ribosomal RNA transcription. Plays a direct role in upstream activation of rRNA promoters. The protein is DNA-binding protein Fis of Shewanella sediminis (strain HAW-EB3).